The primary structure comprises 426 residues: Glutamyl-tRNA(Gln) amidotransferase subunit D (426 aa).

In terms of domain architecture, Asparaginase/glutaminase spans lysine 82–asparagine 413. Residues threonine 92, threonine 168, aspartate 169, and lysine 245 contribute to the active site.

This sequence belongs to the asparaginase 1 family. GatD subfamily. Heterodimer of GatD and GatE.

The enzyme catalyses L-glutamyl-tRNA(Gln) + L-glutamine + ATP + H2O = L-glutaminyl-tRNA(Gln) + L-glutamate + ADP + phosphate + H(+). Allows the formation of correctly charged Gln-tRNA(Gln) through the transamidation of misacylated Glu-tRNA(Gln) in organisms which lack glutaminyl-tRNA synthetase. The reaction takes place in the presence of glutamine and ATP through an activated gamma-phospho-Glu-tRNA(Gln). The GatDE system is specific for glutamate and does not act on aspartate. The polypeptide is Glutamyl-tRNA(Gln) amidotransferase subunit D (Methanococcus vannielii (strain ATCC 35089 / DSM 1224 / JCM 13029 / OCM 148 / SB)).